The following is a 118-amino-acid chain: Small ribosomal subunit protein uS13 (118 aa).

Positions 94–118 (GLPVRGQRTKTNARTRKGPRKPIKK) are disordered.

This sequence belongs to the universal ribosomal protein uS13 family. In terms of assembly, part of the 30S ribosomal subunit. Forms a loose heterodimer with protein S19. Forms two bridges to the 50S subunit in the 70S ribosome.

In terms of biological role, located at the top of the head of the 30S subunit, it contacts several helices of the 16S rRNA. In the 70S ribosome it contacts the 23S rRNA (bridge B1a) and protein L5 of the 50S subunit (bridge B1b), connecting the 2 subunits; these bridges are implicated in subunit movement. Contacts the tRNAs in the A and P-sites. This Pasteurella multocida (strain Pm70) protein is Small ribosomal subunit protein uS13.